The chain runs to 363 residues: Aminomethyltransferase (363 aa).

It belongs to the GcvT family. The glycine cleavage system is composed of four proteins: P, T, L and H.

The catalysed reaction is N(6)-[(R)-S(8)-aminomethyldihydrolipoyl]-L-lysyl-[protein] + (6S)-5,6,7,8-tetrahydrofolate = N(6)-[(R)-dihydrolipoyl]-L-lysyl-[protein] + (6R)-5,10-methylene-5,6,7,8-tetrahydrofolate + NH4(+). Functionally, the glycine cleavage system catalyzes the degradation of glycine. The chain is Aminomethyltransferase from Staphylococcus epidermidis (strain ATCC 35984 / DSM 28319 / BCRC 17069 / CCUG 31568 / BM 3577 / RP62A).